A 307-amino-acid polypeptide reads, in one-letter code: UPF0276 protein Bphyt_5128 (307 aa).

Belongs to the UPF0276 family.

This Paraburkholderia phytofirmans (strain DSM 17436 / LMG 22146 / PsJN) (Burkholderia phytofirmans) protein is UPF0276 protein Bphyt_5128.